Consider the following 160-residue polypeptide: MRHRNAGYKLGRNTSHRRALLRNLVTSILMEDRVETTITKAKAARPHVEKLITLGKKGDVHSRRQALAYLQTREAVTRLFDTVAPRYGDRNGGYLRIVRSGFQRGDGAEKAFIELLGAEQELDEKRQKRAEARAKRREEMQKAMAEQQQAEGGEPEGGNE.

Residues 123–141 show a composition bias toward basic and acidic residues; sequence DEKRQKRAEARAKRREEMQ. The tract at residues 123 to 160 is disordered; the sequence is DEKRQKRAEARAKRREEMQKAMAEQQQAEGGEPEGGNE. Residues 142–152 show a composition bias toward low complexity; it reads KAMAEQQQAEG.

Belongs to the bacterial ribosomal protein bL17 family. Part of the 50S ribosomal subunit. Contacts protein L32.

The polypeptide is Large ribosomal subunit protein bL17 (Acidobacterium capsulatum (strain ATCC 51196 / DSM 11244 / BCRC 80197 / JCM 7670 / NBRC 15755 / NCIMB 13165 / 161)).